Here is a 220-residue protein sequence, read N- to C-terminus: ATP-dependent Clp protease proteolytic subunit 1 (220 aa).

S118 serves as the catalytic Nucleophile. The active site involves H143.

Belongs to the peptidase S14 family. As to quaternary structure, fourteen ClpP subunits assemble into 2 heptameric rings which stack back to back to give a disk-like structure with a central cavity, resembling the structure of eukaryotic proteasomes.

The protein localises to the cytoplasm. The enzyme catalyses Hydrolysis of proteins to small peptides in the presence of ATP and magnesium. alpha-casein is the usual test substrate. In the absence of ATP, only oligopeptides shorter than five residues are hydrolyzed (such as succinyl-Leu-Tyr-|-NHMec, and Leu-Tyr-Leu-|-Tyr-Trp, in which cleavage of the -Tyr-|-Leu- and -Tyr-|-Trp bonds also occurs).. In terms of biological role, cleaves peptides in various proteins in a process that requires ATP hydrolysis. Has a chymotrypsin-like activity. Plays a major role in the degradation of misfolded proteins. In Rhodococcus jostii (strain RHA1), this protein is ATP-dependent Clp protease proteolytic subunit 1.